A 316-amino-acid chain; its full sequence is Neutrophil-stimulating factor 1 (316 aa).

The first 21 residues, M1–T21, serve as a signal peptide directing secretion. Residues H126–G316 form an involved in interaction with human CD47 region. N-linked (GlcNAc...) asparagine glycosylation is present at N169.

In terms of assembly, interacts with human CD4. Interacts with human CD47; the interaction results in inhibition of phagocytosis activity of host macrophages. Female salivary gland (at protein level). Saliva (at protein level). Some expression in ovary and midgut (at protein level).

The protein resides in the secreted. In terms of biological role, activates host neutrophils; induces expression of IL1B and CXCL2 at the bite site. Promotes activation of human CD4(+) T-cells. Inhibits phagocytosis activity of host macrophages via the interaction with CD47 receptor on their surface. Suppresses expression of pro-inflammatory cytokines, such as IFN-gamma/IFNG, IL2, TNF-alpha/TNF, IL12B, IL8/CXCL8, IL6, in host white blood cells. Reduces host polymorphonuclear neutrophil chemotaxis induced by N-formylmethionine-leucylphenylalanine (fMLF). Reduces CD11b/ITGAM expression in fMLF-induced host polymorphonuclear neutrophils. (Microbial infection) Enhances early replication of Zika virus in the host. This chain is Neutrophil-stimulating factor 1, found in Aedes aegypti (Yellowfever mosquito).